Reading from the N-terminus, the 113-residue chain is Large ribosomal subunit protein uL18 (113 aa).

The protein belongs to the universal ribosomal protein uL18 family. In terms of assembly, part of the 50S ribosomal subunit; part of the 5S rRNA/L5/L18/L25 subcomplex. Contacts the 5S and 23S rRNAs.

This is one of the proteins that bind and probably mediate the attachment of the 5S RNA into the large ribosomal subunit, where it forms part of the central protuberance. In Phocaeicola vulgatus (strain ATCC 8482 / DSM 1447 / JCM 5826 / CCUG 4940 / NBRC 14291 / NCTC 11154) (Bacteroides vulgatus), this protein is Large ribosomal subunit protein uL18.